The chain runs to 530 residues: GH3 domain-containing protein (530 aa).

The N-terminal stretch at 1–17 (MLLWPLLLLLLLLPTLA) is a signal peptide. The segment at 99-122 (LTKASQTQQEDSGEQPLPPTSNQD) is disordered. An N-linked (GlcNAc...) asparagine glycan is attached at Asn450. Residue Gln489 is modified to N5-methylglutamine.

Belongs to the GH3 family. Post-translationally, methylated at Gln-489 by N6AMT1.

It localises to the endoplasmic reticulum. The protein localises to the nucleus envelope. This is GH3 domain-containing protein (GHDC) from Homo sapiens (Human).